Consider the following 255-residue polypeptide: Developmental and secondary metabolism regulator MVE1 (255 aa).

The Velvet domain maps to 31–226; it reads GRKLTYRMSV…AEQGCRVRIR (196 aa). The short motif at 45 to 50 is the Nuclear localization signal element; sequence VRARAC. 2 disordered regions span residues 163–184 and 229–255; these read CKSP…DAHV and VRMR…QARA. Over residues 245–255 the composition is skewed to acidic residues; sequence NYEDETAQARA.

This sequence belongs to the velvet family. VeA subfamily. In terms of assembly, component of the heterotrimeric velvet complex composed of LAE1, MVE1 and VEL2; MVE1 acting as a bridging protein between LAE1 and VEL2.

Its subcellular location is the nucleus. The protein resides in the cytoplasm. Its function is as follows. Component of the velvet transcription factor complex that controls sexual/asexual developmental ratio in response to light, promoting sexual development in the darkness while stimulating asexual sporulation under illumination. The velvet complex hat acts as a global regulator for secondary metabolite gene expression. Controls the expression of the melanin gene cluster. Mediates the light-stimulated formation of aerial mycelia. This Zymoseptoria tritici (strain CBS 115943 / IPO323) (Speckled leaf blotch fungus) protein is Developmental and secondary metabolism regulator MVE1.